A 198-amino-acid polypeptide reads, in one-letter code: Putative mycofactocin biosynthesis transcriptional regulator MftR (198 aa).

An HTH tetR-type domain is found at 12–72 (STTPHHISDV…GDFSTHLAQL (61 aa)). Positions 35–54 (SVDDIARAAGIARRTLFRYY) form a DNA-binding region, H-T-H motif.

Functionally, may regulate a gene cluster involved in mycofactocin expression. Mycofactocin is a conserved polypeptide that might serve as an electron carrier. The chain is Putative mycofactocin biosynthesis transcriptional regulator MftR (mftR) from Mycobacterium tuberculosis (strain ATCC 25618 / H37Rv).